The chain runs to 88 residues: Sec-independent protein translocase protein TatA (88 aa).

A helical membrane pass occupies residues 3-23 (IFGVGLPEVTVILILALLIFG). Residues 56 to 66 (MKEEDKDESPK) show a composition bias toward basic and acidic residues. The segment at 56-88 (MKEEDKDESPKSIESNQSNEINQEKIDSENSNN) is disordered. Residues 67–76 (SIESNQSNEI) show a composition bias toward polar residues. A compositionally biased stretch (basic and acidic residues) spans 77 to 88 (NQEKIDSENSNN).

The protein belongs to the TatA/E family. As to quaternary structure, forms a complex with TatC.

Its subcellular location is the cell inner membrane. Its function is as follows. Part of the twin-arginine translocation (Tat) system that transports large folded proteins containing a characteristic twin-arginine motif in their signal peptide across membranes. TatA could form the protein-conducting channel of the Tat system. The sequence is that of Sec-independent protein translocase protein TatA from Prochlorococcus marinus (strain MIT 9301).